A 343-amino-acid polypeptide reads, in one-letter code: 4-hydroxy-2-oxovalerate aldolase (343 aa).

A Pyruvate carboxyltransferase domain is found at 4–254 (PRLTDTTLRD…NPGLDVFGLM (251 aa)). Residue 12 to 13 (RD) coordinates substrate. D13 contributes to the Mn(2+) binding site. H16 (proton acceptor) is an active-site residue. The substrate site is built by S166 and H193. Positions 193 and 195 each coordinate Mn(2+). Substrate is bound at residue Y284.

It belongs to the 4-hydroxy-2-oxovalerate aldolase family.

It carries out the reaction (S)-4-hydroxy-2-oxopentanoate = acetaldehyde + pyruvate. The polypeptide is 4-hydroxy-2-oxovalerate aldolase (Chloroflexus aggregans (strain MD-66 / DSM 9485)).